The following is a 402-amino-acid chain: Phosphoglycerate kinase (402 aa).

Substrate is bound by residues 24 to 26, R40, 63 to 66, R122, and R155; these read DFN and HFGR. ATP is bound by residues K206, G297, E328, and 358–361; that span reads GGDS.

Belongs to the phosphoglycerate kinase family. As to quaternary structure, monomer.

The protein localises to the cytoplasm. It carries out the reaction (2R)-3-phosphoglycerate + ATP = (2R)-3-phospho-glyceroyl phosphate + ADP. The protein operates within carbohydrate degradation; glycolysis; pyruvate from D-glyceraldehyde 3-phosphate: step 2/5. The polypeptide is Phosphoglycerate kinase (Prochlorococcus marinus (strain MIT 9312)).